A 208-amino-acid polypeptide reads, in one-letter code: FMN-dependent NADH:quinone oxidoreductase (208 aa).

Residues S10, 16 to 18, and 96 to 99 each bind FMN; these read SRS and MYNF.

The protein belongs to the azoreductase type 1 family. As to quaternary structure, homodimer. FMN serves as cofactor.

It catalyses the reaction 2 a quinone + NADH + H(+) = 2 a 1,4-benzosemiquinone + NAD(+). The enzyme catalyses N,N-dimethyl-1,4-phenylenediamine + anthranilate + 2 NAD(+) = 2-(4-dimethylaminophenyl)diazenylbenzoate + 2 NADH + 2 H(+). Quinone reductase that provides resistance to thiol-specific stress caused by electrophilic quinones. Functionally, also exhibits azoreductase activity. Catalyzes the reductive cleavage of the azo bond in aromatic azo compounds to the corresponding amines. This Xanthobacter autotrophicus (strain ATCC BAA-1158 / Py2) protein is FMN-dependent NADH:quinone oxidoreductase.